The chain runs to 405 residues: Ubiquitin-like modifier-activating enzyme 5 (405 aa).

The tract at residues 1–44 is disordered; that stretch reads MATVEELQTRVKQLEEELERERTRNRGGTDGGGGRKKIDQMSSE. Over residues 7 to 24 the composition is skewed to basic and acidic residues; that stretch reads LQTRVKQLEEELERERTR. ATP contacts are provided by G81, D102, K125, N148, and N182. Positions 224 and 227 each coordinate Zn(2+). C248 (glycyl thioester intermediate) is an active-site residue. Residues C301 and C306 each coordinate Zn(2+). Residues 346-377 form a linker region; sequence AETTEEELKAASHGHVPELVEGVHVAYVRPMT. The UFC1-binding sequence (UFC) motif lies at 390–405; the sequence is DDQESLEDLMAKMKSI.

Belongs to the ubiquitin-activating E1 family. UBA5 subfamily. Homodimer; homodimerization is required for UFM1 activation. Interacts (via UIS motif) with UFM1; binds UFM1 via a trans-binding mechanism in which UFM1 interacts with distinct sites in both subunits of the UBA5 homodimer. Interacts (via C-terminus) with UFC1.

Its subcellular location is the cytoplasm. The protein resides in the nucleus. The protein localises to the endoplasmic reticulum membrane. It is found in the golgi apparatus. E1-like enzyme which specifically catalyzes the first step in ufmylation. Activates UFM1 by first adenylating its C-terminal glycine residue with ATP, and thereafter linking this residue to the side chain of a cysteine residue in E1, yielding a UFM1-E1 thioester and free AMP. Activates UFM1 via a trans-binding mechanism, in which UFM1 interacts with distinct sites in both subunits of the UBA5 homodimer. Trans-binding also promotes stabilization of the UBA5 homodimer, and enhances ATP-binding. Transfer of UFM1 from UBA5 to the E2-like enzyme UFC1 also takes place using a trans mechanism. The protein is Ubiquitin-like modifier-activating enzyme 5 of Branchiostoma floridae (Florida lancelet).